Here is a 122-residue protein sequence, read N- to C-terminus: Large ribosomal subunit protein uL14 (122 aa).

The protein belongs to the universal ribosomal protein uL14 family. Part of the 50S ribosomal subunit. Forms a cluster with proteins L3 and L19. In the 70S ribosome, L14 and L19 interact and together make contacts with the 16S rRNA in bridges B5 and B8.

Its function is as follows. Binds to 23S rRNA. Forms part of two intersubunit bridges in the 70S ribosome. This Petrotoga mobilis (strain DSM 10674 / SJ95) protein is Large ribosomal subunit protein uL14.